A 319-amino-acid polypeptide reads, in one-letter code: Tyrosine--tRNA ligase (319 aa).

Position 40 (Tyr-40) interacts with L-tyrosine. A 'HIGH' region motif is present at residues 45–53 (PSGRIHMGH). Residues Tyr-159, Gln-163, Asp-166, and Gln-181 each coordinate L-tyrosine. A 'KMSKS' region motif is present at residues 216 to 220 (KMSSS). Ser-219 provides a ligand contact to ATP.

The protein belongs to the class-I aminoacyl-tRNA synthetase family. TyrS type 3 subfamily. As to quaternary structure, homodimer.

Its subcellular location is the cytoplasm. It catalyses the reaction tRNA(Tyr) + L-tyrosine + ATP = L-tyrosyl-tRNA(Tyr) + AMP + diphosphate + H(+). Catalyzes the attachment of tyrosine to tRNA(Tyr) in a two-step reaction: tyrosine is first activated by ATP to form Tyr-AMP and then transferred to the acceptor end of tRNA(Tyr). The polypeptide is Tyrosine--tRNA ligase (Methanococcus maripaludis (strain DSM 14266 / JCM 13030 / NBRC 101832 / S2 / LL)).